Here is a 343-residue protein sequence, read N- to C-terminus: Dihydroorotase (343 aa).

His-14 and His-16 together coordinate Zn(2+). Substrate is bound by residues 16–18 (HVR) and Asn-42. 3 residues coordinate Zn(2+): Lys-99, His-136, and His-174. Lys-99 bears the N6-carboxylysine mark. Residue His-136 participates in substrate binding. Residue Leu-219 participates in substrate binding. Asp-247 is a binding site for Zn(2+). Residue Asp-247 is part of the active site. Residues His-251 and Ala-263 each coordinate substrate.

The protein belongs to the metallo-dependent hydrolases superfamily. DHOase family. Class II DHOase subfamily. As to quaternary structure, homodimer. It depends on Zn(2+) as a cofactor.

The enzyme catalyses (S)-dihydroorotate + H2O = N-carbamoyl-L-aspartate + H(+). The protein operates within pyrimidine metabolism; UMP biosynthesis via de novo pathway; (S)-dihydroorotate from bicarbonate: step 3/3. Functionally, catalyzes the reversible cyclization of carbamoyl aspartate to dihydroorotate. This is Dihydroorotase from Variovorax paradoxus (strain S110).